The following is a 254-amino-acid chain: Large ribosomal subunit protein uL2B (254 aa).

K46 participates in a covalent cross-link: Glycyl lysine isopeptide (Lys-Gly) (interchain with G-Cter in ubiquitin). At S52 the chain carries Phosphoserine. K93 participates in a covalent cross-link: Glycyl lysine isopeptide (Lys-Gly) (interchain with G-Cter in ubiquitin). The residue at position 95 (S95) is a Phosphoserine. Glycyl lysine isopeptide (Lys-Gly) (interchain with G-Cter in ubiquitin) cross-links involve residues K119 and K145. Residues S159, S160, and S249 each carry the phosphoserine modification.

This sequence belongs to the universal ribosomal protein uL2 family. As to quaternary structure, component of the large ribosomal subunit (LSU). Mature yeast ribosomes consist of a small (40S) and a large (60S) subunit. The 40S small subunit contains 1 molecule of ribosomal RNA (18S rRNA) and 33 different proteins (encoded by 57 genes). The large 60S subunit contains 3 rRNA molecules (25S, 5.8S and 5S rRNA) and 46 different proteins (encoded by 81 genes).

It localises to the cytoplasm. Its function is as follows. Component of the ribosome, a large ribonucleoprotein complex responsible for the synthesis of proteins in the cell. The small ribosomal subunit (SSU) binds messenger RNAs (mRNAs) and translates the encoded message by selecting cognate aminoacyl-transfer RNA (tRNA) molecules. The large subunit (LSU) contains the ribosomal catalytic site termed the peptidyl transferase center (PTC), which catalyzes the formation of peptide bonds, thereby polymerizing the amino acids delivered by tRNAs into a polypeptide chain. The nascent polypeptides leave the ribosome through a tunnel in the LSU and interact with protein factors that function in enzymatic processing, targeting, and the membrane insertion of nascent chains at the exit of the ribosomal tunnel. The chain is Large ribosomal subunit protein uL2B from Saccharomyces cerevisiae (strain ATCC 204508 / S288c) (Baker's yeast).